A 256-amino-acid polypeptide reads, in one-letter code: uncharacterized protein (256 aa).

This is an uncharacterized protein from Pasteurella multocida (strain Pm70).